Reading from the N-terminus, the 393-residue chain is Elongation factor Tu (393 aa).

One can recognise a tr-type G domain in the interval 10–203; sequence KPHVNIGTIG…AVDDYIPEPV (194 aa). The G1 stretch occupies residues 19–26; it reads GHVDHGKT. 19–26 serves as a coordination point for GTP; the sequence is GHVDHGKT. Thr-26 contributes to the Mg(2+) binding site. Positions 60–64 are G2; the sequence is GITIS. A G3 region spans residues 81–84; it reads DCPG. GTP-binding positions include 81–85 and 136–139; these read DCPGH and NKVD. The segment at 136 to 139 is G4; the sequence is NKVD. A G5 region spans residues 173–175; the sequence is SAL.

This sequence belongs to the TRAFAC class translation factor GTPase superfamily. Classic translation factor GTPase family. EF-Tu/EF-1A subfamily. In terms of assembly, monomer.

It is found in the cytoplasm. The catalysed reaction is GTP + H2O = GDP + phosphate + H(+). Its function is as follows. GTP hydrolase that promotes the GTP-dependent binding of aminoacyl-tRNA to the A-site of ribosomes during protein biosynthesis. The chain is Elongation factor Tu from Chlorobaculum parvum (strain DSM 263 / NCIMB 8327) (Chlorobium vibrioforme subsp. thiosulfatophilum).